The following is a 333-amino-acid chain: NADH-quinone oxidoreductase subunit H (333 aa).

8 consecutive transmembrane segments (helical) span residues 15 to 35, 88 to 108, 117 to 137, 159 to 179, 191 to 211, 250 to 270, 273 to 293, and 313 to 333; these read LVIF…FVTY, FILA…TLPF, IGVG…GVVA, ISYE…TGSL, VWYI…AVAE, LFAM…PVMF, FIPG…VLIW, and VLFP…ELFF.

Belongs to the complex I subunit 1 family. As to quaternary structure, NDH-1 is composed of 14 different subunits. Subunits NuoA, H, J, K, L, M, N constitute the membrane sector of the complex.

It is found in the cell membrane. It carries out the reaction a quinone + NADH + 5 H(+)(in) = a quinol + NAD(+) + 4 H(+)(out). Functionally, NDH-1 shuttles electrons from NADH, via FMN and iron-sulfur (Fe-S) centers, to quinones in the respiratory chain. The immediate electron acceptor for the enzyme in this species is believed to be ubiquinone. Couples the redox reaction to proton translocation (for every two electrons transferred, four hydrogen ions are translocated across the cytoplasmic membrane), and thus conserves the redox energy in a proton gradient. This subunit may bind ubiquinone. This chain is NADH-quinone oxidoreductase subunit H, found in Geobacillus sp. (strain WCH70).